The primary structure comprises 445 residues: Phosphoglucosamine mutase (445 aa).

Residue Ser-102 is the Phosphoserine intermediate of the active site. Residues Ser-102, Asp-241, Asp-243, and Asp-245 each coordinate Mg(2+). Ser-102 is modified (phosphoserine).

This sequence belongs to the phosphohexose mutase family. Requires Mg(2+) as cofactor. Post-translationally, activated by phosphorylation.

The catalysed reaction is alpha-D-glucosamine 1-phosphate = D-glucosamine 6-phosphate. In terms of biological role, catalyzes the conversion of glucosamine-6-phosphate to glucosamine-1-phosphate. This is Phosphoglucosamine mutase from Shigella flexneri serotype 5b (strain 8401).